Here is a 232-residue protein sequence, read N- to C-terminus: Exosome complex component RRP40 (232 aa).

Belongs to the RRP40 family. Component of the RNA exosome complex. Specifically part of the catalytically inactive RNA exosome core complex.

It is found in the cytoplasm. It localises to the nucleus. Its subcellular location is the nucleolus. In terms of biological role, non-catalytic component of the RNA exosome complex which has 3'-&gt;5' exoribonuclease activity and participates in a multitude of cellular RNA processing and degradation events. In the nucleus, the RNA exosome complex is involved in proper maturation of stable RNA species such as rRNA, snRNA and snoRNA, in the elimination of RNA processing by-products and non-coding 'pervasive' transcripts such as antisense RNA species, and of mRNAs with processing defects, thereby limiting or excluding their export to the cytoplasm. In the cytoplasm, the RNA exosome complex is involved in general mRNA turnover and specifically degrades inherently unstable mRNAs containing AU-rich elements (AREs) within their 3' untranslated regions, and in RNA surveillance pathways, preventing translation of aberrant mRNAs. The catalytic inactive RNA exosome core complex of 9 subunits is proposed to play a pivotal role in the binding and presentation of RNA for ribonucleolysis, and to serve as a scaffold for the association with catalytic subunits and accessory proteins or complexes. Required generally for normal embryonic and neuronal development. Also plays a critical role in the maintenance of neuronal function in mature flies by controlling the levels of specific mRNAs such as the synaptic regulator Arc1. The protein is Exosome complex component RRP40 of Drosophila melanogaster (Fruit fly).